A 1004-amino-acid polypeptide reads, in one-letter code: Translation initiation factor IF-2 (1004 aa).

The disordered stretch occupies residues 36-393 (SSTIEPPVVK…RQKRNEYESM (358 aa)). Composition is skewed to low complexity over residues 62–157 (AAKP…AKPA) and 173–183 (AAKPGAEAPRP). Composition is skewed to pro residues over residues 184–196 (GGMP…PAPK) and 219–236 (PRPG…PGGG). 2 stretches are compositionally biased toward gly residues: residues 237–249 (PRPQ…GGQR) and 261–277 (GNRG…GPRP). Positions 279–303 (GGPRPQGGSRPQGGSAQGAQGAPSQ) are enriched in low complexity. Residues 330–373 (GKGGRGGQAGGGAGGGFNRGGGTGGGAGRGGRRGGTAGAFGRPG) show a composition bias toward gly residues. Basic residues predominate over residues 377–386 (RRGRKSKRQK). Residues 499–671 (KRPPVVTVMG…VCLTADAELD (173 aa)) enclose the tr-type G domain. The G1 stretch occupies residues 508 to 515 (GHVDHGKT). 508–515 (GHVDHGKT) is a GTP binding site. A G2 region spans residues 533–537 (GITQG). The G3 stretch occupies residues 558–561 (DTPG). Residues 558–562 (DTPGH) and 612–615 (NKID) each bind GTP. The G4 stretch occupies residues 612 to 615 (NKID). The G5 stretch occupies residues 648-650 (SAK).

It belongs to the TRAFAC class translation factor GTPase superfamily. Classic translation factor GTPase family. IF-2 subfamily.

It localises to the cytoplasm. Functionally, one of the essential components for the initiation of protein synthesis. Protects formylmethionyl-tRNA from spontaneous hydrolysis and promotes its binding to the 30S ribosomal subunits. Also involved in the hydrolysis of GTP during the formation of the 70S ribosomal complex. The protein is Translation initiation factor IF-2 of Corynebacterium glutamicum (strain ATCC 13032 / DSM 20300 / JCM 1318 / BCRC 11384 / CCUG 27702 / LMG 3730 / NBRC 12168 / NCIMB 10025 / NRRL B-2784 / 534).